A 364-amino-acid polypeptide reads, in one-letter code: DNA replication and repair protein RecF (364 aa).

30 to 37 (GNNAQGKT) is a binding site for ATP.

Belongs to the RecF family.

Its subcellular location is the cytoplasm. The RecF protein is involved in DNA metabolism; it is required for DNA replication and normal SOS inducibility. RecF binds preferentially to single-stranded, linear DNA. It also seems to bind ATP. This chain is DNA replication and repair protein RecF, found in Clostridium botulinum (strain 657 / Type Ba4).